The primary structure comprises 639 residues: tRNA uridine 5-carboxymethylaminomethyl modification enzyme MnmG (639 aa).

Position 13-18 (13-18 (GGGHAG)) interacts with FAD. 274–288 (GPRYCPSIEDKIHRF) provides a ligand contact to NAD(+).

The protein belongs to the MnmG family. As to quaternary structure, homodimer. Heterotetramer of two MnmE and two MnmG subunits. Requires FAD as cofactor.

It is found in the cytoplasm. In terms of biological role, NAD-binding protein involved in the addition of a carboxymethylaminomethyl (cmnm) group at the wobble position (U34) of certain tRNAs, forming tRNA-cmnm(5)s(2)U34. This Polynucleobacter asymbioticus (strain DSM 18221 / CIP 109841 / QLW-P1DMWA-1) (Polynucleobacter necessarius subsp. asymbioticus) protein is tRNA uridine 5-carboxymethylaminomethyl modification enzyme MnmG.